A 517-amino-acid polypeptide reads, in one-letter code: Protein ERGIC-53 (517 aa).

An N-terminal signal peptide occupies residues 1–30 (MAVSRRRVPQAGARSFFCALLLSFSQFTGS). Residues 31–484 (DGTGGDAAAP…DLPPFPSCLS (454 aa)) lie on the Lumenal side of the membrane. Positions 52-275 (RRFEYKYSFK…DVLSFLTFQL (224 aa)) constitute an L-type lectin-like domain. Ser96 and Asp129 together coordinate a carbohydrate. The Ca(2+) site is built by Asp160, Phe162, and Asn164. Residues Asn164 and His186 each coordinate a carbohydrate. Asp189 is a binding site for Ca(2+). An intrachain disulfide couples Cys198 to Cys238. 259 to 261 (GGL) provides a ligand contact to a carbohydrate. Ser433 carries the post-translational modification Phosphoserine. Residues 485–505 (TIHFVIFVVVQTVLFVGYIMY) form a helical membrane-spanning segment. The Cytoplasmic segment spans residues 506–517 (RTQQEAAAKKFF). A mediates interaction with RAB3GAP1, RAB3GAP2 and UBXN6 region spans residues 506-517 (RTQQEAAAKKFF). Positions 516-517 (FF) match the ER export motif motif.

In terms of assembly, exists both as a covalent disulfide-linked homohexamer, and a complex of three disulfide-linked dimers non-covalently kept together. Interacts with MCFD2. May interact with TMEM115. Interacts with RAB3GAP1 and RAB3GAP2. Interacts with UBXN6. Interacts with SERPINA1/alpha1-antitrypsin. Interacts with BET1.

It is found in the endoplasmic reticulum-Golgi intermediate compartment membrane. The protein localises to the golgi apparatus membrane. The protein resides in the endoplasmic reticulum membrane. Its function is as follows. Mannose-specific lectin. May recognize sugar residues of glycoproteins, glycolipids, or glycosylphosphatidyl inositol anchors and may be involved in the sorting or recycling of proteins, lipids, or both. The LMAN1-MCFD2 complex forms a specific cargo receptor for the ER-to-Golgi transport of selected proteins. This is Protein ERGIC-53 (Lman1) from Mus musculus (Mouse).